Consider the following 363-residue polypeptide: Chorismate synthase (363 aa).

The NADP(+) site is built by Arg48 and Arg54. Residues 125-127 (RSS), 237-238 (NA), Gly277, 292-296 (KPTSS), and Arg318 each bind FMN.

The protein belongs to the chorismate synthase family. In terms of assembly, homotetramer. FMNH2 is required as a cofactor.

The catalysed reaction is 5-O-(1-carboxyvinyl)-3-phosphoshikimate = chorismate + phosphate. The protein operates within metabolic intermediate biosynthesis; chorismate biosynthesis; chorismate from D-erythrose 4-phosphate and phosphoenolpyruvate: step 7/7. In terms of biological role, catalyzes the anti-1,4-elimination of the C-3 phosphate and the C-6 proR hydrogen from 5-enolpyruvylshikimate-3-phosphate (EPSP) to yield chorismate, which is the branch point compound that serves as the starting substrate for the three terminal pathways of aromatic amino acid biosynthesis. This reaction introduces a second double bond into the aromatic ring system. The sequence is that of Chorismate synthase from Pseudomonas putida (strain W619).